The chain runs to 387 residues: tRNA pseudouridine synthase B (387 aa).

Asp43 acts as the Nucleophile in catalysis.

It belongs to the pseudouridine synthase TruB family. Type 1 subfamily.

The catalysed reaction is uridine(55) in tRNA = pseudouridine(55) in tRNA. Functionally, responsible for synthesis of pseudouridine from uracil-55 in the psi GC loop of transfer RNAs. This Bifidobacterium longum (strain NCC 2705) protein is tRNA pseudouridine synthase B.